Here is an 83-residue protein sequence, read N- to C-terminus: uncharacterized protein (83 aa).

The next 3 helical transmembrane spans lie at 5–22 (VLLS…VYSI), 32–49 (IIKI…FSPA), and 56–78 (IGTI…IFIA).

It is found in the cell membrane. This is an uncharacterized protein from Rickettsia prowazekii (strain Madrid E).